Consider the following 1179-residue polypeptide: DNA-directed RNA polymerase subunit beta' (1179 aa).

Cys-60, Cys-62, Cys-75, and Cys-78 together coordinate Zn(2+). Residues Asp-449, Asp-451, and Asp-453 each contribute to the Mg(2+) site. Zn(2+)-binding residues include Cys-796, Cys-871, Cys-878, and Cys-881.

It belongs to the RNA polymerase beta' chain family. In terms of assembly, the RNAP catalytic core consists of 2 alpha, 1 beta, 1 beta' and 1 omega subunit. When a sigma factor is associated with the core the holoenzyme is formed, which can initiate transcription. Mg(2+) is required as a cofactor. It depends on Zn(2+) as a cofactor.

It carries out the reaction RNA(n) + a ribonucleoside 5'-triphosphate = RNA(n+1) + diphosphate. Functionally, DNA-dependent RNA polymerase catalyzes the transcription of DNA into RNA using the four ribonucleoside triphosphates as substrates. This is DNA-directed RNA polymerase subunit beta' from Symbiobacterium thermophilum (strain DSM 24528 / JCM 14929 / IAM 14863 / T).